Reading from the N-terminus, the 256-residue chain is 3-deoxy-manno-octulosonate cytidylyltransferase (256 aa).

It belongs to the KdsB family.

It is found in the cytoplasm. It catalyses the reaction 3-deoxy-alpha-D-manno-oct-2-ulosonate + CTP = CMP-3-deoxy-beta-D-manno-octulosonate + diphosphate. It participates in nucleotide-sugar biosynthesis; CMP-3-deoxy-D-manno-octulosonate biosynthesis; CMP-3-deoxy-D-manno-octulosonate from 3-deoxy-D-manno-octulosonate and CTP: step 1/1. It functions in the pathway bacterial outer membrane biogenesis; lipopolysaccharide biosynthesis. Activates KDO (a required 8-carbon sugar) for incorporation into bacterial lipopolysaccharide in Gram-negative bacteria. The chain is 3-deoxy-manno-octulosonate cytidylyltransferase from Histophilus somni (strain 129Pt) (Haemophilus somnus).